Consider the following 454-residue polypeptide: Flavonoid 3-O-glucosyltransferase (454 aa).

Thr25 contacts UDP. His26 serves as the catalytic Proton acceptor. Position 89 (Arg89) interacts with myricetin. Asp124 serves as the catalytic Charge relay. Myricetin contacts are provided by His155, Glu192, and Phe202. Ser282, Ser308, Trp334, and Ala335 together coordinate UDP. UDP-alpha-D-glucose contacts are provided by Ala335, Gln337, His352, Trp355, Asn356, Ser357, and Glu360. His352 is a UDP binding site. Residues Asn356, Ser357, and Glu360 each contribute to the UDP site. Gly375 is a myricetin binding site. Residues Asp376 and Gln377 each contribute to the UDP-alpha-D-glucose site.

The protein belongs to the UDP-glycosyltransferase family. In terms of tissue distribution, highly expressed in flower buds, flowers and pods. Lower expression in leaves, petioles and stems.

Its pathway is secondary metabolite biosynthesis; flavonoid biosynthesis. Its function is as follows. Catalyzes the glycosylation of flavonoids at the 3-O-position. Glycosylates the 7-O-position if the 3-O-position is not available. Also able to perform 3-O-glycosylation of anthocyanidins. This chain is Flavonoid 3-O-glucosyltransferase (UGT78G1), found in Medicago truncatula (Barrel medic).